Here is a 92-residue protein sequence, read N- to C-terminus: Cell division protein FtsB (92 aa).

Residues 1–3 (MRL) lie on the Cytoplasmic side of the membrane. The chain crosses the membrane as a helical span at residues 4–21 (FIFLLVAVLLLFQYDFWF). Over 22–92 (GKNGYLDYKR…IFYHIVKEQK (71 aa)) the chain is Periplasmic. A coiled-coil region spans residues 26–74 (YLDYKRTAQQIAQHKQENEKLSQRNQVVAAEIKDLKQGVEAIEERARFQ).

The protein belongs to the FtsB family. As to quaternary structure, part of a complex composed of FtsB, FtsL and FtsQ.

The protein localises to the cell inner membrane. Functionally, essential cell division protein. May link together the upstream cell division proteins, which are predominantly cytoplasmic, with the downstream cell division proteins, which are predominantly periplasmic. The polypeptide is Cell division protein FtsB (Pasteurella multocida (strain Pm70)).